Reading from the N-terminus, the 126-residue chain is Large ribosomal subunit protein eL28 (126 aa).

Residue S2 is modified to N-acetylserine.

This sequence belongs to the eukaryotic ribosomal protein eL28 family.

The protein is Large ribosomal subunit protein eL28 (rpl-28) of Caenorhabditis elegans.